Consider the following 333-residue polypeptide: Ribosomal protein L11 methyltransferase (333 aa).

S-adenosyl-L-methionine is bound by residues threonine 160, glycine 181, aspartate 203, and asparagine 267.

It belongs to the methyltransferase superfamily. PrmA family.

It is found in the cytoplasm. It catalyses the reaction L-lysyl-[protein] + 3 S-adenosyl-L-methionine = N(6),N(6),N(6)-trimethyl-L-lysyl-[protein] + 3 S-adenosyl-L-homocysteine + 3 H(+). Functionally, methylates ribosomal protein L11. This Lachnoclostridium phytofermentans (strain ATCC 700394 / DSM 18823 / ISDg) (Clostridium phytofermentans) protein is Ribosomal protein L11 methyltransferase.